The chain runs to 82 residues: Small ribosomal subunit protein uS17 (82 aa).

Belongs to the universal ribosomal protein uS17 family. In terms of assembly, part of the 30S ribosomal subunit.

In terms of biological role, one of the primary rRNA binding proteins, it binds specifically to the 5'-end of 16S ribosomal RNA. The protein is Small ribosomal subunit protein uS17 of Shewanella frigidimarina (strain NCIMB 400).